The sequence spans 634 residues: MTNSNLRTENHFDYVKISIASPQRIMDWGQRTLPNGQVVGEVTKPETINYRTLKPEMDGLFCEKIFGPSKDWECHCGKYKRVRHRGIVCERCGVEVTESRVRRHRMGYIKLAAPVSHVWYLKGIPSYVAILLDIPLRDVEQIVYFNCYVVLDPGDHKELKYKQLLTEDEWLEIEDEIYAEDSIIENEPIVGIGAEALKQLLEDLDLNQVAEELREEITNSKGQKRAKLIKRIRVIDNFIATNAKPEWMVLDAIPVIPPDLRPMVQLDGGRFATSDLNDLYRRVINRNNRLARLQEILAPEIIVRNEKRMLQEAVDALIDNGRRGRTVVGANNRALKSLSDIIEGKQGRFRQNLLGKRVDYSGRSVIVVGPKLKMHQCGLPKEMAIELFQPFVIHRLIRQNIVNNIKAAKKLIQKADDEVMQVLQEVIDGHPILLNRAPTLHRLGIQAFEPKLVGGRAIQLHPLVCPAFNADFDGDQMAVHVPLALEAQTEARMLMLASNNILSPATGEPIVTPSQDMVLGSYYLTALQPNYQKPEFGDNKTTFASLEDVIFAFEDKRLSLHEWVWVRFNGEVEDEDEMRSPQKTQELEDGSKLEIWNLRRDRFDSDNNLISRFVLTTVGRVVMNYTIIDSVSKT.

Cys-74, Cys-76, Cys-89, and Cys-92 together coordinate Zn(2+). Mg(2+)-binding residues include Asp-471, Asp-473, and Asp-475.

The protein belongs to the RNA polymerase beta' chain family. RpoC1 subfamily. In terms of assembly, in cyanobacteria the RNAP catalytic core is composed of 2 alpha, 1 beta, 1 beta', 1 gamma and 1 omega subunit. When a sigma factor is associated with the core the holoenzyme is formed, which can initiate transcription. The cofactor is Mg(2+). Zn(2+) is required as a cofactor.

It catalyses the reaction RNA(n) + a ribonucleoside 5'-triphosphate = RNA(n+1) + diphosphate. Its function is as follows. DNA-dependent RNA polymerase catalyzes the transcription of DNA into RNA using the four ribonucleoside triphosphates as substrates. The chain is DNA-directed RNA polymerase subunit gamma from Prochlorococcus marinus (strain MIT 9215).